A 559-amino-acid chain; its full sequence is Small ribosomal subunit protein bS1 (559 aa).

S1 motif domains follow at residues Gly21–Glu87, Ser105–Arg171, Gly192–Lys260, Gly277–Lys347, Gly364–Lys434, and Gly451–His520.

Belongs to the bacterial ribosomal protein bS1 family.

Binds mRNA; thus facilitating recognition of the initiation point. It is needed to translate mRNA with a short Shine-Dalgarno (SD) purine-rich sequence. This is Small ribosomal subunit protein bS1 (rpsA) from Buchnera aphidicola subsp. Schizaphis graminum (strain Sg).